Reading from the N-terminus, the 122-residue chain is UPF0102 protein CLH_1204 (122 aa).

The protein belongs to the UPF0102 family.

The polypeptide is UPF0102 protein CLH_1204 (Clostridium botulinum (strain Alaska E43 / Type E3)).